The chain runs to 159 residues: Ribosomal RNA large subunit methyltransferase H (159 aa).

S-adenosyl-L-methionine-binding positions include Leu-76, Gly-108, and 127–132 (FSKMTF).

It belongs to the RNA methyltransferase RlmH family. In terms of assembly, homodimer.

The protein resides in the cytoplasm. It catalyses the reaction pseudouridine(1915) in 23S rRNA + S-adenosyl-L-methionine = N(3)-methylpseudouridine(1915) in 23S rRNA + S-adenosyl-L-homocysteine + H(+). Functionally, specifically methylates the pseudouridine at position 1915 (m3Psi1915) in 23S rRNA. The sequence is that of Ribosomal RNA large subunit methyltransferase H from Clostridium novyi (strain NT).